A 50-amino-acid chain; its full sequence is Sproutin (50 aa).

Ser8 is subject to Phosphoserine; by PKC.

Brain.

In terms of biological role, neurite outgrowth factor. In Rattus norvegicus (Rat), this protein is Sproutin.